Reading from the N-terminus, the 126-residue chain is Glycine cleavage system H protein (126 aa).

In terms of domain architecture, Lipoyl-binding spans 22-104 (IATVGITAFA…YGRGWLFKVE (83 aa)). An N6-lipoyllysine modification is found at Lys63.

It belongs to the GcvH family. In terms of assembly, the glycine cleavage system is composed of four proteins: P, T, L and H. (R)-lipoate serves as cofactor.

Functionally, the glycine cleavage system catalyzes the degradation of glycine. The H protein shuttles the methylamine group of glycine from the P protein to the T protein. The chain is Glycine cleavage system H protein from Thermobifida fusca (strain YX).